The chain runs to 136 residues: Histone H3.3 (136 aa).

The disordered stretch occupies residues 1–45; that stretch reads MARTKQTARKSTGGKAPRKQLASKAARKAAPATGGVKKPHRYRPP. K5 is modified (N6,N6,N6-trimethyllysine; alternate). N6,N6-dimethyllysine; alternate is present on K5. 2 positions are modified to N6-methyllysine; alternate: K5 and K10. An N6-acetyllysine; alternate modification is found at K10. The residue at position 11 (S11) is a Phosphoserine. At K15 the chain carries N6,N6-dimethyllysine; alternate. N6-acetyllysine; alternate is present on residues K15, K19, K24, K28, and K37. An N6-methyllysine; alternate mark is found at K19, K24, K28, and K37. Over residues 19–32 the composition is skewed to low complexity; the sequence is KQLASKAARKAAPA. K28 and K37 each carry N6,N6,N6-trimethyllysine; alternate. N6,N6-dimethyllysine; alternate occurs at positions 28 and 37. N6-acetyllysine occurs at positions 57 and 65. N6,N6,N6-trimethyllysine; alternate is present on K80. Position 80 is an N6,N6-dimethyllysine; alternate (K80). Residue K80 is modified to N6-methyllysine; alternate. N6-acetyllysine is present on K123.

It belongs to the histone H3 family. The nucleosome is a histone octamer containing two molecules each of H2A, H2B, H3 and H4 assembled in one H3-H4 heterotetramer and two H2A-H2B heterodimers. The octamer wraps approximately 147 bp of DNA. In terms of processing, phosphorylated by ark1 to form H3S10ph in a cell cycle-dependent manner during mitosis and meiosis. H3S10ph is also formed by ssp2, promotes subsequent H3K14ac formation by gcn5, and is required for transcriptional activation through TBP recruitment to the promoters. Dephosphorylation is performed by sds21. Post-translationally, mono-, di- and trimethylated by the COMPASS complex to form H3K4me1/2/3. H3K4me activates gene expression by regulating transcription elongation and plays a role in telomere length maintenance. H3K4me enrichment correlates with transcription levels, and occurs in a 5' to 3' gradient with H3K4me3 enrichment at the 5'-end of genes, shifting to H3K4me2 and then H3K4me1. Methylated by clr4 to form H3K9me1. H3K9me1 represents a specific tag for epigenetic transcriptional repression by recruiting swi6/HP1 to methylated histones. Targeting to histone probably involves clr3 and rik1. Essential for silencing of centromeres and directional switching of the mating type. Methylated by set2 to form H3K36me. H3K36me represses gene expression. Methylated by dot1 to form H3K79me. H3K79me is required for association of SIR proteins with telomeric regions and for telomeric silencing. The COMPASS-mediated formation of H3K4me2/3 and the dot1-mediated formation of H3K79me require H2BK123ub1. Acetylation of histone H3 leads to transcriptional activation. H3K14ac formation by gcn5 is promoted by H3S10ph. H3K14ac can also be formed by esa1. H3K56ac formation occurs predominantly in newly synthesized H3 molecules during G1, S and G2/M of the cell cycle and may be involved in DNA repair. Acetylation at Lys-123 (H3K122ac) plays a central role in chromatin structure: localizes at the surface of the histone octamer and stimulates transcription, possibly by promoting nucleosome instability.

The protein resides in the nucleus. Its subcellular location is the chromosome. Functionally, core component of nucleosome. Nucleosomes wrap and compact DNA into chromatin, limiting DNA accessibility to the cellular machineries which require DNA as a template. Histones thereby play a central role in transcription regulation, DNA repair, DNA replication and chromosomal stability. DNA accessibility is regulated via a complex set of post-translational modifications of histones, also called histone code, and nucleosome remodeling. In Schizosaccharomyces pombe (strain 972 / ATCC 24843) (Fission yeast), this protein is Histone H3.3 (hht3).